A 69-amino-acid polypeptide reads, in one-letter code: Metallothionein-like protein 3 (69 aa).

It belongs to the metallothionein superfamily. Type 15 family. As to expression, expressed in leaf mesophyll cells, root tips, and at low levels in anthers.

Functionally, metallothioneins have a high content of cysteine residues that bind various heavy metals. Functions as a metal chelator of copper (Cu) and zinc (Zn). Plays a role in Cu homeostasis, specifically in the remobilization of Cu from senescing leaves. The mobilization of Cu from internal sources is important for seed development. This chain is Metallothionein-like protein 3, found in Arabidopsis thaliana (Mouse-ear cress).